A 491-amino-acid polypeptide reads, in one-letter code: Aspartyl/glutamyl-tRNA(Asn/Gln) amidotransferase subunit B (491 aa).

This sequence belongs to the GatB/GatE family. GatB subfamily. In terms of assembly, heterotrimer of A, B and C subunits.

It carries out the reaction L-glutamyl-tRNA(Gln) + L-glutamine + ATP + H2O = L-glutaminyl-tRNA(Gln) + L-glutamate + ADP + phosphate + H(+). The enzyme catalyses L-aspartyl-tRNA(Asn) + L-glutamine + ATP + H2O = L-asparaginyl-tRNA(Asn) + L-glutamate + ADP + phosphate + 2 H(+). Functionally, allows the formation of correctly charged Asn-tRNA(Asn) or Gln-tRNA(Gln) through the transamidation of misacylated Asp-tRNA(Asn) or Glu-tRNA(Gln) in organisms which lack either or both of asparaginyl-tRNA or glutaminyl-tRNA synthetases. The reaction takes place in the presence of glutamine and ATP through an activated phospho-Asp-tRNA(Asn) or phospho-Glu-tRNA(Gln). The polypeptide is Aspartyl/glutamyl-tRNA(Asn/Gln) amidotransferase subunit B (Nostoc punctiforme (strain ATCC 29133 / PCC 73102)).